A 169-amino-acid chain; its full sequence is Phosphopantetheine adenylyltransferase (169 aa).

Substrate is bound at residue threonine 13. Residues 13–14 and histidine 21 each bind ATP; that span reads TF. Substrate contacts are provided by lysine 45, leucine 82, and arginine 96. Residues 97 to 99, glutamate 107, and 132 to 138 contribute to the ATP site; these read GLR and HQFISSR.

This sequence belongs to the bacterial CoaD family. Homohexamer. Requires Mg(2+) as cofactor.

The protein resides in the cytoplasm. It carries out the reaction (R)-4'-phosphopantetheine + ATP + H(+) = 3'-dephospho-CoA + diphosphate. The protein operates within cofactor biosynthesis; coenzyme A biosynthesis; CoA from (R)-pantothenate: step 4/5. Functionally, reversibly transfers an adenylyl group from ATP to 4'-phosphopantetheine, yielding dephospho-CoA (dPCoA) and pyrophosphate. The sequence is that of Phosphopantetheine adenylyltransferase from Acidiphilium cryptum (strain JF-5).